The primary structure comprises 436 residues: UPF0229 protein mll9637 (436 aa).

Residues 54–103 (IPRKGTGEPTFGDDKESGRRQHILPGNRTFSSGDLIPKPGGGGGYGSAAG) are disordered.

Belongs to the UPF0229 family.

This Mesorhizobium japonicum (strain LMG 29417 / CECT 9101 / MAFF 303099) (Mesorhizobium loti (strain MAFF 303099)) protein is UPF0229 protein mll9637.